The sequence spans 979 residues: UPF0182 protein Rv0064 (979 aa).

7 consecutive transmembrane segments (helical) span residues 19 to 41 (LVTAGMGMLALLLFGPRLVDIYV), 63 to 85 (LAIVAAVALVVAGIVLAALLLAY), 114 to 136 (LFGWGIAVTLGVVCGLIASFDWV), 174 to 196 (WLFVAVVLAFLASLLTHYLFGGL), 208 to 230 (AARVQLAVFAGAVVLLKAVAYWL), 261 to 280 (LVLVAIAVLCAVSFFTAIFL), and 285 to 307 (IPAMAAALLVLSAILVGGLWPLL). Residues 898-948 (GTGRVATARGGDAASAPPPGAGGPAPPQAVPPPRTTQPPAAPPRGPDVPPA) are disordered. The span at 913–946 (APPPGAGGPAPPQAVPPPRTTQPPAAPPRGPDVP) shows a compositional bias: pro residues.

The protein belongs to the UPF0182 family.

The protein resides in the cell membrane. This chain is UPF0182 protein Rv0064, found in Mycobacterium tuberculosis (strain ATCC 25618 / H37Rv).